A 550-amino-acid chain; its full sequence is Amino acid transporter AVT1C (550 aa).

Residues 1-11 (MNHVPSDQSFY) show a composition bias toward polar residues. Disordered regions lie at residues 1-44 (MNHV…ENQA) and 128-148 (QGLL…EKSS). A compositionally biased stretch (basic and acidic residues) spans 20 to 34 (RKDYVEEDGGSHSDS). The next 11 membrane-spanning stretches (helical) occupy residues 165–185 (AVLN…PYAA), 190–210 (WLGL…GILL), 237–257 (IFVS…YIIL), 283–303 (LFAL…DLSV), 307–327 (ISAG…WIGL), 342–362 (LSTL…HAVF), 377–397 (AVLL…AVMG), 422–442 (IAVW…ISPV), 462–484 (IGIR…FFGL), 488–510 (LIGS…LSIV), and 521–541 (LCVL…YSAL).

This sequence belongs to the amino acid/polyamine transporter 2 family. Amino acid/auxin permease (AAAP) (TC 2.A.18.5) subfamily.

It localises to the membrane. The polypeptide is Amino acid transporter AVT1C (Arabidopsis thaliana (Mouse-ear cress)).